We begin with the raw amino-acid sequence, 258 residues long: Glucanase inhibitor protein 3 (258 aa).

A signal peptide spans 1–19 (MKIISAVAASSIALGAVSA). The Peptidase S1 domain occupies 29 to 256 (VLGGAVVPSG…ALEWINSITK (228 aa)). The cysteines at positions 56 and 72 are disulfide-linked. 3 N-linked (GlcNAc...) asparagine glycosylation sites follow: N90, N105, and N110. Intrachain disulfides connect C180-C192 and C202-C233.

The protein belongs to the peptidase S1 family. Forms an apoplastic complex with host endoglucanases in tomato leaves during P.infestans infection.

Its subcellular location is the secreted. Functionally, secreted effector that suppresses host plant glucan elicitor-mediated defense responses. Targets host endoglucanases and inhibits the endoglucanase-mediated release of elicitor-active glucan oligosaccharides from P.infestans cell walls. This is Glucanase inhibitor protein 3 from Phytophthora infestans (Potato late blight agent).